We begin with the raw amino-acid sequence, 590 residues long: Shugoshin (590 aa).

The disordered stretch occupies residues 1-20; sequence MPKRKIAPNKESSRRTVSHD. Residues 11-20 show a composition bias toward basic and acidic residues; it reads ESSRRTVSHD. Positions 25-86 form a coiled coil; the sequence is QIQEFQNLMD…QENVTLRSKT (62 aa). 3 disordered regions span residues 133-235, 291-337, and 411-550; these read LRTM…QVEE, PSNP…HSMK, and RNRE…NSNI. Over residues 173–185 the composition is skewed to basic and acidic residues; it reads SFNKDDGPDLEPK. Residues 302–326 are compositionally biased toward low complexity; it reads PSATLPTTTSDASTVYPSSSSSTNS. A compositionally biased stretch (basic residues) spans 328 to 337; that stretch reads PKTKIKHSMK. The span at 448–459 shows a compositional bias: basic and acidic residues; sequence KKTEDEIHEDTA. Polar residues predominate over residues 513–526; the sequence is IVNNLSDENSTTRP. Residues 527-550 show a composition bias toward low complexity; sequence SKSSKGTSNNNNNYNNFDNNNSNI.

It belongs to the shugoshin family. In terms of processing, ubiquitinated by the anaphase promoting complex (APC) at the onset of anaphase, conducting to its degradation.

The protein resides in the chromosome. It localises to the centromere. It is found in the kinetochore. The protein localises to the cytoplasm. Its subcellular location is the cytoskeleton. The protein resides in the spindle pole. Plays a central role in chromosome cohesion during mitosis and meiosis divisions by preventing premature dissociation of cohesin complex from centromeres after prophase, when most of cohesin complex dissociates from chromosomes arms. Probably act by protecting REC8 and RAD21 from separase degradation during anaphase. Also acts as a spindle checkpoint component required for sensing tension between sister chromatids during mitosis, its degradation when they separate preventing cell cycle arrest and chromosome loss in anaphase, a time when sister chromatids are no longer under tension. The sequence is that of Shugoshin (SGO1) from Saccharomyces cerevisiae (strain ATCC 204508 / S288c) (Baker's yeast).